Here is a 319-residue protein sequence, read N- to C-terminus: F-box only protein 8 (319 aa).

One can recognise an F-box domain in the interval 68 to 111 (FINLEMLPPELSFTILSYLNATDLCLASCVWQDLANDELLWQGL). The SEC7 domain maps to 146-276 (FNANPDEGVN…LILLSIDLTS (131 aa)).

Its function is as follows. May promote guanine-nucleotide exchange on an ARF. Promotes the activation of ARF through replacement of GDP with GTP (Potential). This Homo sapiens (Human) protein is F-box only protein 8 (FBXO8).